Reading from the N-terminus, the 164-residue chain is Protein SprT (164 aa).

The SprT-like domain maps to 14–156; it reads QLAESFFKRP…LCRRCRNTLV (143 aa). His-69 provides a ligand contact to Zn(2+). Residue Glu-70 is part of the active site. His-73 serves as a coordination point for Zn(2+).

The protein belongs to the SprT family. Zn(2+) serves as cofactor.

It localises to the cytoplasm. The sequence is that of Protein SprT from Pseudomonas fluorescens (strain Pf0-1).